A 159-amino-acid polypeptide reads, in one-letter code: IQ domain-containing protein J (159 aa).

An IQ domain is found at 47–67 (ESKVKIIQRAWREYLQRQEPL). Residues 63 to 88 (RQEPLGKRSPSPPSVSSEKLSSSVSM) are disordered. The segment covering 76–87 (SVSSEKLSSSVS) has biased composition (low complexity).

This Homo sapiens (Human) protein is IQ domain-containing protein J.